Reading from the N-terminus, the 423-residue chain is Ankyrin repeat and SAM domain-containing protein 4B (423 aa).

The segment at 1 to 251 (MSTRYHQAAS…PKDFKEKLHF (251 aa)) is mediates localization to microvilli. ANK repeat units follow at residues 31–60 (DGMT…DPDK), 64–93 (WGNT…NIFA), and 97–126 (DLKS…VQNT). Residues 130-169 (KRVTRLKEQALKNARKQMKECERLQERHQNKMARTYSKED) are a coiled coil. Disordered stretches follow at residues 158–181 (QNKM…STLS), 207–227 (KSKK…SGQR), and 303–335 (QRQG…AGDL). Residues 171-181 (GTISSSHSTLS) are compositionally biased toward low complexity. The segment covering 207-224 (KSKKNKDTTEQLEKDGRS) has biased composition (basic and acidic residues). The segment at 253–352 (VEEDDDVQHE…EWEEDAVDAT (100 aa)) is mediates interaction with MYO7B. Residues 301–335 (LFQRQGAAGTVEEEEEEEEEEEEEKREANGTAGDL) adopt a coiled-coil conformation. Acidic residues predominate over residues 311–324 (VEEEEEEEEEEEEE). The SAM domain maps to 357–409 (FLQSQHLEEFLPIFMREQIDLEALLLCSDEDLQNIHMQLGPRKKVLSAIDKRK). Positions 421–423 (TSL) match the PDZ-binding; mediates interaction with USH1C motif.

In terms of assembly, part of the IMAC/intermicrovillar adhesion complex/intermicrovillar tip-link complex composed of ANKS4B, MYO7B, USH1C, CDHR2 and CDHR5. Interacts with USH1C; the interaction is direct and is required for ANKS4B localization to the tip of microvilli. Interacts with MYO7B; the interaction is direct. May interact with HSPA5. Cochlea, kidney, lung, liver, pancreas, salivary gland and small intestine (at protein level). Expressed in kidney, small intestine, pancreas, liver and colon. Not detected in heart, spleen and brain.

It localises to the cell projection. It is found in the microvillus. Its function is as follows. As part of the intermicrovillar adhesion complex/IMAC plays a role in epithelial brush border differentiation, controlling microvilli organization and length. Plays a role in assembly of the complex. May play a role in cellular response to endoplasmic reticulum stress. This Mus musculus (Mouse) protein is Ankyrin repeat and SAM domain-containing protein 4B.